Consider the following 487-residue polypeptide: Glutamyl-tRNA(Gln) amidotransferase subunit A (487 aa).

Catalysis depends on charge relay system residues lysine 82 and serine 157. Serine 181 functions as the Acyl-ester intermediate in the catalytic mechanism.

The protein belongs to the amidase family. GatA subfamily. As to quaternary structure, heterotrimer of A, B and C subunits.

It carries out the reaction L-glutamyl-tRNA(Gln) + L-glutamine + ATP + H2O = L-glutaminyl-tRNA(Gln) + L-glutamate + ADP + phosphate + H(+). Allows the formation of correctly charged Gln-tRNA(Gln) through the transamidation of misacylated Glu-tRNA(Gln) in organisms which lack glutaminyl-tRNA synthetase. The reaction takes place in the presence of glutamine and ATP through an activated gamma-phospho-Glu-tRNA(Gln). The polypeptide is Glutamyl-tRNA(Gln) amidotransferase subunit A (Fusobacterium nucleatum subsp. nucleatum (strain ATCC 25586 / DSM 15643 / BCRC 10681 / CIP 101130 / JCM 8532 / KCTC 2640 / LMG 13131 / VPI 4355)).